The primary structure comprises 25 residues: Antimicrobial peptide scolopin-2 (25 aa).

In terms of tissue distribution, expressed by the venom gland.

It localises to the secreted. Its function is as follows. Antimicrobial peptide against both Gram-positive, -negative and yeast. Also induces histamine release by mast cells and shows moderate hemolytic activities against both human and rabbit red cells. In Scolopendra mutilans (Chinese red-headed centipede), this protein is Antimicrobial peptide scolopin-2.